A 329-amino-acid chain; its full sequence is Serpentine receptor class alpha-7 (329 aa).

Transmembrane regions (helical) follow at residues 25–45, 57–77, 104–124, 143–163, 187–207, 237–257, and 273–293; these read YVYLSLISLTFIFSYFAVKIV, ILLFHNLVSANLHQLLYLFSA, YLKVLVTGISGMIYGQTGLLL, VGIAISIAILFLSLITGKIII, RLFASIYTFISSFNLVFSVLL, TICFLTFVQFIFMFIYSFGIF, and FIVVWFYTIPFIAALFPILLV.

It belongs to the nematode receptor-like protein sra family.

The protein resides in the membrane. The protein is Serpentine receptor class alpha-7 (sra-7) of Caenorhabditis elegans.